The following is a 91-amino-acid chain: UPF0250 protein NMA1380 (91 aa).

The protein belongs to the UPF0250 family.

This Neisseria meningitidis serogroup A / serotype 4A (strain DSM 15465 / Z2491) protein is UPF0250 protein NMA1380.